The following is a 704-amino-acid chain: Glycine--tRNA ligase beta subunit (704 aa).

Belongs to the class-II aminoacyl-tRNA synthetase family. Tetramer of two alpha and two beta subunits.

The protein resides in the cytoplasm. The enzyme catalyses tRNA(Gly) + glycine + ATP = glycyl-tRNA(Gly) + AMP + diphosphate. This is Glycine--tRNA ligase beta subunit from Rhizobium etli (strain CIAT 652).